The following is a 130-amino-acid chain: Small ribosomal subunit protein uS11 (130 aa).

The protein belongs to the universal ribosomal protein uS11 family. Part of the 30S ribosomal subunit. Interacts with proteins S7 and S18. Binds to IF-3.

In terms of biological role, located on the platform of the 30S subunit, it bridges several disparate RNA helices of the 16S rRNA. Forms part of the Shine-Dalgarno cleft in the 70S ribosome. This is Small ribosomal subunit protein uS11 from Thermosynechococcus vestitus (strain NIES-2133 / IAM M-273 / BP-1).